Consider the following 365-residue polypeptide: Heme A synthase (365 aa).

The next 8 membrane-spanning stretches (helical) occupy residues Ala-17 to Gly-37, Val-107 to Pro-127, Ala-132 to Ala-152, Val-164 to Leu-184, Ala-203 to Leu-223, Gln-264 to Ile-283, Gly-296 to Leu-316, and Pro-320 to Leu-340. Position 267 (His-267) interacts with heme. His-327 is a binding site for heme.

This sequence belongs to the COX15/CtaA family. Type 2 subfamily. As to quaternary structure, interacts with CtaB. Heme b is required as a cofactor.

Its subcellular location is the cell membrane. The catalysed reaction is Fe(II)-heme o + 2 A + H2O = Fe(II)-heme a + 2 AH2. It functions in the pathway porphyrin-containing compound metabolism; heme A biosynthesis; heme A from heme O: step 1/1. Functionally, catalyzes the conversion of heme O to heme A by two successive hydroxylations of the methyl group at C8. The first hydroxylation forms heme I, the second hydroxylation results in an unstable dihydroxymethyl group, which spontaneously dehydrates, resulting in the formyl group of heme A. The protein is Heme A synthase of Rhodopseudomonas palustris (strain HaA2).